Reading from the N-terminus, the 162-residue chain is Transcription elongation factor GreA (162 aa).

A coiled-coil region spans residues serine 44–isoleucine 69.

This sequence belongs to the GreA/GreB family.

Functionally, necessary for efficient RNA polymerase transcription elongation past template-encoded arresting sites. The arresting sites in DNA have the property of trapping a certain fraction of elongating RNA polymerases that pass through, resulting in locked ternary complexes. Cleavage of the nascent transcript by cleavage factors such as GreA or GreB allows the resumption of elongation from the new 3'terminus. GreA releases sequences of 2 to 3 nucleotides. This is Transcription elongation factor GreA from Rickettsia bellii (strain RML369-C).